The primary structure comprises 379 residues: UDP-4-amino-4-deoxy-L-arabinose--oxoglutarate aminotransferase (379 aa).

At lysine 182 the chain carries N6-(pyridoxal phosphate)lysine.

It belongs to the DegT/DnrJ/EryC1 family. ArnB subfamily. Homodimer. Requires pyridoxal 5'-phosphate as cofactor.

It carries out the reaction UDP-4-amino-4-deoxy-beta-L-arabinose + 2-oxoglutarate = UDP-beta-L-threo-pentopyranos-4-ulose + L-glutamate. It participates in nucleotide-sugar biosynthesis; UDP-4-deoxy-4-formamido-beta-L-arabinose biosynthesis; UDP-4-deoxy-4-formamido-beta-L-arabinose from UDP-alpha-D-glucuronate: step 2/3. The protein operates within bacterial outer membrane biogenesis; lipopolysaccharide biosynthesis. In terms of biological role, catalyzes the conversion of UDP-4-keto-arabinose (UDP-Ara4O) to UDP-4-amino-4-deoxy-L-arabinose (UDP-L-Ara4N). The modified arabinose is attached to lipid A and is required for resistance to polymyxin and cationic antimicrobial peptides. This chain is UDP-4-amino-4-deoxy-L-arabinose--oxoglutarate aminotransferase, found in Sodalis glossinidius (strain morsitans).